A 320-amino-acid chain; its full sequence is Eukaryotic translation initiation factor 3 subunit G (320 aa).

The disordered stretch occupies residues 1-25 (MPTGDFDSKPSWADQVEEEGEDDKC). S8 and S11 each carry phosphoserine. Phosphothreonine occurs at positions 38 and 41. 4 positions are modified to phosphoserine: S42, S189, S223, and S264. Residues 209 to 234 (KTGKYVPPSLRDGASRRGESMQPNRR) are disordered. Basic and acidic residues predominate over residues 221–234 (GASRRGESMQPNRR). One can recognise an RRM domain in the interval 239 to 317 (ATIRVTNLSE…LILNVEWAKP (79 aa)).

It belongs to the eIF-3 subunit G family. In terms of assembly, component of the eukaryotic translation initiation factor 3 (eIF-3) complex, which is composed of 13 subunits: EIF3A, EIF3B, EIF3C, EIF3D, EIF3E, EIF3F, EIF3G, EIF3H, EIF3I, EIF3J, EIF3K, EIF3L and EIF3M. The eIF-3 complex appears to include 3 stable modules: module A is composed of EIF3A, EIF3B, EIF3G and EIF3I; module B is composed of EIF3F, EIF3H, and EIF3M; and module C is composed of EIF3C, EIF3D, EIF3E, EIF3K and EIF3L. EIF3C of module C binds EIF3B of module A and EIF3H of module B, thereby linking the three modules. EIF3J is a labile subunit that binds to the eIF-3 complex via EIF3B. The eIF-3 complex interacts with RPS6KB1 under conditions of nutrient depletion. Mitogenic stimulation leads to binding and activation of a complex composed of FRAP1 and RAPTOR, leading to phosphorylation and release of RPS6KB1 and binding of EIF4B to eIF-3. Interacts (via C-terminus) with AIFM1 (via N-terminus). Interacts with DHX33; the interaction is independent of RNA. Post-translationally, phosphorylated. Phosphorylation is enhanced upon serum stimulation.

It localises to the cytoplasm. The protein localises to the nucleus. It is found in the perinuclear region. RNA-binding component of the eukaryotic translation initiation factor 3 (eIF-3) complex, which is required for several steps in the initiation of protein synthesis. The eIF-3 complex associates with the 40S ribosome and facilitates the recruitment of eIF-1, eIF-1A, eIF-2:GTP:methionyl-tRNAi and eIF-5 to form the 43S pre-initiation complex (43S PIC). The eIF-3 complex stimulates mRNA recruitment to the 43S PIC and scanning of the mRNA for AUG recognition. The eIF-3 complex is also required for disassembly and recycling of post-termination ribosomal complexes and subsequently prevents premature joining of the 40S and 60S ribosomal subunits prior to initiation. The eIF-3 complex specifically targets and initiates translation of a subset of mRNAs involved in cell proliferation, including cell cycling, differentiation and apoptosis, and uses different modes of RNA stem-loop binding to exert either translational activation or repression. This subunit can bind 18S rRNA. The protein is Eukaryotic translation initiation factor 3 subunit G of Bos taurus (Bovine).